Reading from the N-terminus, the 157-residue chain is MSSAVETVTKLVTPILEEQNFELVEVEFVKEGKNWFLRVFIDKEGGIDIEECAFVSEKLSEKLDAMDPDPIPQAYFLEVSSPGAERPLKKESDYEQAVGKYIHISLYQAVDGEKQIEGTLVHLDSEQLTLSVKIKTRVKEMTFERKNIAKARLAIQF.

It belongs to the RimP family.

The protein resides in the cytoplasm. Required for maturation of 30S ribosomal subunits. This is Ribosome maturation factor RimP from Enterococcus faecalis (strain ATCC 700802 / V583).